Consider the following 102-residue polypeptide: Carboxysome shell protein CsoS1C (102 aa).

A BMC domain is found at 8-93; sequence ALGMIETRGL…PHKEVEPVLA (86 aa).

This sequence belongs to the bacterial microcompartments protein family. CsoS1 subfamily. Homohexamer with a small central pore.

The protein resides in the carboxysome. Functionally, one of shell proteins of the carboxysome, a polyhedral inclusion where RuBisCO (ribulose bisphosphate carboxylase, ccbL-ccbS) is sequestered. Assembles into hexamers which make sheets that form the facets of the polyhedral carboxysome. The shell probably limits the diffusion of CO(2) into and out of the carboxysome. This Hydrogenovibrio crunogenus (strain DSM 25203 / XCL-2) (Thiomicrospira crunogena) protein is Carboxysome shell protein CsoS1C.